The chain runs to 247 residues: Triosephosphate isomerase (247 aa).

Residue 8 to 10 coordinates substrate; the sequence is NWK. Residue His-95 is the Electrophile of the active site. The Proton acceptor role is filled by Glu-162. Substrate is bound by residues Gly-168 and Ser-207.

It belongs to the triosephosphate isomerase family. In terms of assembly, homodimer.

It localises to the cytoplasm. It carries out the reaction D-glyceraldehyde 3-phosphate = dihydroxyacetone phosphate. It functions in the pathway carbohydrate biosynthesis; gluconeogenesis. It participates in carbohydrate degradation; glycolysis; D-glyceraldehyde 3-phosphate from glycerone phosphate: step 1/1. Involved in the gluconeogenesis. Catalyzes stereospecifically the conversion of dihydroxyacetone phosphate (DHAP) to D-glyceraldehyde-3-phosphate (G3P). This chain is Triosephosphate isomerase, found in Gluconacetobacter diazotrophicus (strain ATCC 49037 / DSM 5601 / CCUG 37298 / CIP 103539 / LMG 7603 / PAl5).